The sequence spans 225 residues: Biosynthetic peptidoglycan transglycosylase (225 aa).

A helical membrane pass occupies residues 8 to 28 (VLLIFIGAILFIQLWIFSSLV).

Belongs to the glycosyltransferase 51 family.

It localises to the cell inner membrane. The enzyme catalyses [GlcNAc-(1-&gt;4)-Mur2Ac(oyl-L-Ala-gamma-D-Glu-L-Lys-D-Ala-D-Ala)](n)-di-trans,octa-cis-undecaprenyl diphosphate + beta-D-GlcNAc-(1-&gt;4)-Mur2Ac(oyl-L-Ala-gamma-D-Glu-L-Lys-D-Ala-D-Ala)-di-trans,octa-cis-undecaprenyl diphosphate = [GlcNAc-(1-&gt;4)-Mur2Ac(oyl-L-Ala-gamma-D-Glu-L-Lys-D-Ala-D-Ala)](n+1)-di-trans,octa-cis-undecaprenyl diphosphate + di-trans,octa-cis-undecaprenyl diphosphate + H(+). The protein operates within cell wall biogenesis; peptidoglycan biosynthesis. In terms of biological role, peptidoglycan polymerase that catalyzes glycan chain elongation from lipid-linked precursors. This chain is Biosynthetic peptidoglycan transglycosylase, found in Acinetobacter baumannii (strain ATCC 17978 / DSM 105126 / CIP 53.77 / LMG 1025 / NCDC KC755 / 5377).